We begin with the raw amino-acid sequence, 152 residues long: Large ribosomal subunit protein uL15 (152 aa).

Residues 1-79 (MRLNELSPPP…GRHTPAHPKV (79 aa)) form a disordered region. Gly residues predominate over residues 22 to 35 (GEGSGYGKTSGRGQ).

This sequence belongs to the universal ribosomal protein uL15 family. Part of the 50S ribosomal subunit.

Functionally, binds to the 23S rRNA. In Rubrobacter xylanophilus (strain DSM 9941 / JCM 11954 / NBRC 16129 / PRD-1), this protein is Large ribosomal subunit protein uL15.